Consider the following 83-residue polypeptide: Kunitz-type serine protease inhibitor scutellin-3 (83 aa).

A signal peptide spans 1-24 (MSSGGLLLLLGLLTLWEVLTPVSS). The BPTI/Kunitz inhibitor domain occupies 31 to 81 (CELPADIGPCEDFTGAFHYSPREHECIEFIYGGCKGNANNFNTLEECESAC). Cystine bridges form between Cys-31–Cys-81, Cys-40–Cys-64, and Cys-56–Cys-77.

Belongs to the venom Kunitz-type family. As to expression, expressed by the venom gland.

It is found in the secreted. In terms of biological role, serine protease inhibitor. The protein is Kunitz-type serine protease inhibitor scutellin-3 of Oxyuranus scutellatus scutellatus (Australian taipan).